The following is a 146-amino-acid chain: MHCPFCQNPDTKVIDTRISDDGHSIRRRRVCPKCSKRFTTVETSMLLVTKRSGGVEPFSRDKVISGVRKACQGRPVREEDLKLLGQKVEEDLRSRGLAEVTSDEVGKAILKPLRDLDVVAYLRFASVYQNFAGLEDFQSAIDGLRE.

A zinc finger lies at 3–34 (CPFCQNPDTKVIDTRISDDGHSIRRRRVCPKC). Positions 46 to 136 (LLVTKRSGGV…VYQNFAGLED (91 aa)) constitute an ATP-cone domain.

The protein belongs to the NrdR family. It depends on Zn(2+) as a cofactor.

Its function is as follows. Negatively regulates transcription of bacterial ribonucleotide reductase nrd genes and operons by binding to NrdR-boxes. The polypeptide is Transcriptional repressor NrdR (Bifidobacterium longum (strain NCC 2705)).